Here is a 247-residue protein sequence, read N- to C-terminus: Ribonuclease PH (247 aa).

Phosphate contacts are provided by residues Arg87 and 125-127 (GTR).

The protein belongs to the RNase PH family. In terms of assembly, homohexameric ring arranged as a trimer of dimers.

The catalysed reaction is tRNA(n+1) + phosphate = tRNA(n) + a ribonucleoside 5'-diphosphate. Functionally, phosphorolytic 3'-5' exoribonuclease that plays an important role in tRNA 3'-end maturation. Removes nucleotide residues following the 3'-CCA terminus of tRNAs; can also add nucleotides to the ends of RNA molecules by using nucleoside diphosphates as substrates, but this may not be physiologically important. Probably plays a role in initiation of 16S rRNA degradation (leading to ribosome degradation) during starvation. In Trichormus variabilis (strain ATCC 29413 / PCC 7937) (Anabaena variabilis), this protein is Ribonuclease PH.